Consider the following 536-residue polypeptide: T-complex protein 1 subunit delta (536 aa).

The segment covering 1–15 has biased composition (polar residues); the sequence is MPEGKATSSASNTGK. A disordered region spans residues 1-26; it reads MPEGKATSSASNTGKNKGGAYQDRDK. Glycine 50 lines the ADP pocket. Glycine 50 provides a ligand contact to ATP. Mg(2+) is bound at residue aspartate 101. ADP contacts are provided by glycine 102, threonine 103, threonine 104, serine 105, serine 170, lysine 171, glycine 422, and glutamine 507. The ATP site is built by glycine 102 and threonine 103. Lysine 171 contributes to the ATP binding site.

It belongs to the TCP-1 chaperonin family. Component of the chaperonin-containing T-complex (TRiC), a hexadecamer composed of two identical back-to-back stacked rings enclosing a protein folding chamber. Each ring is made up of eight different subunits: TCP1/CCT1, CCT2, CCT3, CCT4, CCT5, CCT6A/CCT6, CCT7, CCT8.

Its subcellular location is the cytoplasm. It carries out the reaction ATP + H2O = ADP + phosphate + H(+). In terms of biological role, component of the chaperonin-containing T-complex (TRiC), a molecular chaperone complex that assists the folding of actin, tubulin and other proteins upon ATP hydrolysis. This chain is T-complex protein 1 subunit delta (cct4), found in Takifugu rubripes (Japanese pufferfish).